A 143-amino-acid polypeptide reads, in one-letter code: Probable cyclic pyranopterin monophosphate synthase (143 aa).

Substrate contacts are provided by residues 61-63 (MCH) and 97-98 (ME). The active site involves Asp112.

It belongs to the MoaC family. Homohexamer; trimer of dimers.

The enzyme catalyses (8S)-3',8-cyclo-7,8-dihydroguanosine 5'-triphosphate = cyclic pyranopterin phosphate + diphosphate. It functions in the pathway cofactor biosynthesis; molybdopterin biosynthesis. In terms of biological role, catalyzes the conversion of (8S)-3',8-cyclo-7,8-dihydroguanosine 5'-triphosphate to cyclic pyranopterin monophosphate (cPMP). In Sulfolobus acidocaldarius (strain ATCC 33909 / DSM 639 / JCM 8929 / NBRC 15157 / NCIMB 11770), this protein is Probable cyclic pyranopterin monophosphate synthase.